The chain runs to 182 residues: MAQDPNHLIWLDMEMTGLEPDRDRIIEIALVITDSQLNTIAEAPVIAVHQPESVLDAMDDWNKNTHGKSGLIDRVRASTVSEAEAEARMLAFLQEWVPARTSPMCGNSICQDRRFLARYMPAFEAWFHYRNLDVSTLKELAKRWRPEVYKGVDKKGKHEALADIHESIGELRHYRDNFLRLA.

In terms of domain architecture, Exonuclease spans 8–171 (LIWLDMEMTG…ADIHESIGEL (164 aa)). The active site involves Tyr-129.

This sequence belongs to the oligoribonuclease family.

It localises to the cytoplasm. 3'-to-5' exoribonuclease specific for small oligoribonucleotides. This is Oligoribonuclease from Azoarcus sp. (strain BH72).